The sequence spans 511 residues: V-type proton ATPase subunit B, brain isoform (511 aa).

Arginine 400 is a binding site for ATP.

It belongs to the ATPase alpha/beta chains family. As to quaternary structure, V-ATPase is a heteromultimeric enzyme made up of two complexes: the ATP-hydrolytic V1 complex and the proton translocation V0 complex. The V1 complex consists of three catalytic AB heterodimers that form a heterohexamer, three peripheral stalks each consisting of EG heterodimers, one central rotor including subunits D and F, and the regulatory subunits C and H. The proton translocation complex V0 consists of the proton transport subunit a, a ring of proteolipid subunits c9c'', rotary subunit d, subunits e and f, and the accessory subunits ATP6AP1/Ac45 and ATP6AP2/PRR. In terms of tissue distribution, kidney; found in early distal nephron, encompassing thick ascending limbs and distal convoluted tubules and in the alpha-intercalated cells of the cortical collecting ducts (at protein level). Expressed in epididymal clear cells (at protein level). Mainly expressed in the organ of Corti and spiral ganglion neurons, in both the early postnatal cochlea (P2) and the adult cochlea (P30).

It localises to the apical cell membrane. The protein localises to the melanosome. The protein resides in the cytoplasm. Its subcellular location is the cytoplasmic vesicle. It is found in the secretory vesicle. It localises to the synaptic vesicle membrane. The protein localises to the clathrin-coated vesicle membrane. Functionally, non-catalytic subunit of the V1 complex of vacuolar(H+)-ATPase (V-ATPase), a multisubunit enzyme composed of a peripheral complex (V1) that hydrolyzes ATP and a membrane integral complex (V0) that translocates protons. V-ATPase is responsible for acidifying and maintaining the pH of intracellular compartments and in some cell types, is targeted to the plasma membrane, where it is responsible for acidifying the extracellular environment. In renal intercalated cells, can partially compensate the lack of ATP6V1B1 and mediate secretion of protons (H+) into the urine under base-line conditions but not in conditions of acid load. This is V-type proton ATPase subunit B, brain isoform (Atp6v1b2) from Mus musculus (Mouse).